The following is a 317-amino-acid chain: tRNA dimethylallyltransferase (317 aa).

19–26 is an ATP binding site; the sequence is GPTASGKS. 21–26 lines the substrate pocket; sequence TASGKS. The tract at residues 44–47 is interaction with substrate tRNA; the sequence is DSMQ.

It belongs to the IPP transferase family. Monomer. Mg(2+) serves as cofactor.

It catalyses the reaction adenosine(37) in tRNA + dimethylallyl diphosphate = N(6)-dimethylallyladenosine(37) in tRNA + diphosphate. Its function is as follows. Catalyzes the transfer of a dimethylallyl group onto the adenine at position 37 in tRNAs that read codons beginning with uridine, leading to the formation of N6-(dimethylallyl)adenosine (i(6)A). The polypeptide is tRNA dimethylallyltransferase (Methylorubrum extorquens (strain CM4 / NCIMB 13688) (Methylobacterium extorquens)).